The following is a 186-amino-acid chain: Ran guanine nucleotide release factor (186 aa).

The interaction with RAN stretch occupies residues 27 to 70 (DLRPVPDHQEVFCHRVTDQSLIVELLELQAHVQGEEAARYHFED).

Belongs to the MOG1 family. As to quaternary structure, monomer. Interacts with RAN, both RAN-GTP and RAN-GDP. Competes with RCC1 for a common binding site on RAN and thereby inhibits RCC1-mediated nucleotide exchange. Forms a complex with RAN-GTP and RANBP1. Interacts with the cytoplasmic loop 2 of SCN5A.

The protein resides in the nucleus. The protein localises to the cytoplasm. Its subcellular location is the perinuclear region. It is found in the cell membrane. Functionally, may regulate the intracellular trafficking of RAN. Promotes guanine nucleotide release from RAN and inhibits binding of new GTP by preventing the binding of the RAN guanine nucleotide exchange factor RCC1. Regulates the levels of GTP-bound RAN in the nucleus, and thereby plays a role in the regulation of RAN-dependent mitotic spindle dynamics. Enhances the expression of SCN5A at the cell membrane in cardiomyocytes. The protein is Ran guanine nucleotide release factor (RANGRF) of Bos taurus (Bovine).